The sequence spans 139 residues: Heavy metal-associated isoprenylated plant protein 13 (139 aa).

Positions 3-70 (PMKAVLQLSI…LCNTELVSVE (68 aa)) constitute an HMA domain. Residues 70–94 (EVVKPPEKKPEPEKPAPPKPAPAPA) are disordered. The segment covering 73–85 (KPPEKKPEPEKPA) has biased composition (basic and acidic residues). Cysteine 136 is modified (cysteine methyl ester). Residue cysteine 136 is the site of S-farnesyl cysteine attachment. A propeptide spans 137 to 139 (VIM) (removed in mature form).

It belongs to the HIPP family.

Probable heavy-metal-binding protein. The sequence is that of Heavy metal-associated isoprenylated plant protein 13 from Arabidopsis thaliana (Mouse-ear cress).